Reading from the N-terminus, the 507-residue chain is Solute carrier family 2, facilitated glucose transporter member 6 (507 aa).

A disordered region spans residues 1–28; that stretch reads MQEPLLGAEGPDYDTFPEKPPPSPGDRA. At 1 to 37 the chain is on the cytoplasmic side; it reads MQEPLLGAEGPDYDTFPEKPPPSPGDRARVGTLQNKR. A Dileucine internalization motif motif is present at residues 5-6; that stretch reads LL. S23 is modified (phosphoserine). A helical membrane pass occupies residues 38–58; that stretch reads VFLATFAAVLGNFSFGYALVY. Residues 59 to 81 are Extracellular-facing; the sequence is TSPVIPALERSLDPDLHLTKSQA. The helical transmembrane segment at 82-102 threads the bilayer; the sequence is SWFGSVFTLGAAAGGLSAMIL. Residues 103 to 111 are Cytoplasmic-facing; sequence NDLLGRKLS. A helical transmembrane segment spans residues 112 to 132; the sequence is IMFSAVPSAAGYALMAGAHGL. The Extracellular portion of the chain corresponds to 133 to 140; it reads WMLLLGRT. Residues 141–161 traverse the membrane as a helical segment; sequence LTGFAGGLTAACIPVYVSEIA. The Cytoplasmic portion of the chain corresponds to 162-168; that stretch reads PPGVRGA. A helical membrane pass occupies residues 169–189; sequence LGATPQLMAVFGSLSLYALGL. Position 174 (Q174) interacts with a D-hexose. Residues 190 to 194 are Extracellular-facing; it reads LLPWR. A helical transmembrane segment spans residues 195–215; it reads WLAVAGEAPVLIMILLLSFMP. The Cytoplasmic segment spans residues 216–289; that stretch reads NSPRFLLSRG…LLMRLLQQLT (74 aa). 286-287 lines the a D-hexose pocket; it reads QQ. Residues 290 to 310 form a helical membrane-spanning segment; the sequence is GITPILVYLQSIFDSTAVLLP. At 311–314 the chain is on the extracellular side; that stretch reads PKDD. A helical membrane pass occupies residues 315–335; it reads AAIVGAVRLLSVLIAALTMDL. At 336–339 the chain is on the cytoplasmic side; that stretch reads AGRK. The chain crosses the membrane as a helical span at residues 340–360; that stretch reads VLLFVSAAIMFAANLTLGLYI. Residues 361–395 are Extracellular-facing; the sequence is HFGPRPLSPNSTAGLESESWGDLAQPLAAPAGYLT. N370 carries N-linked (GlcNAc...) asparagine glycosylation. The helical transmembrane segment at 396 to 416 threads the bilayer; the sequence is LVPLLATMLFIMGYAVGWGPI. Over 417–435 the chain is Cytoplasmic; sequence TWLLMSEVLPLRARGVASG. W418 provides a ligand contact to a D-hexose. The chain crosses the membrane as a helical span at residues 436–456; the sequence is LCVLASWLTAFVLTKSFLPVV. Residues 457 to 462 are Extracellular-facing; sequence STFGLQ. The helical transmembrane segment at 463-483 threads the bilayer; that stretch reads VPFFFFAAICLVSLVFTGCCV. Over 484–507 the chain is Cytoplasmic; the sequence is PETKGRSLEQIESFFRTGRRSFLR.

Belongs to the major facilitator superfamily. Sugar transporter (TC 2.A.1.1) family. Glucose transporter subfamily. Highly expressed in brain, spleen and peripheral blood leukocytes.

It localises to the lysosome membrane. Its function is as follows. Probable sugar transporter that acts as a regulator of glycolysis in macrophages. Does not transport glucose. This chain is Solute carrier family 2, facilitated glucose transporter member 6, found in Homo sapiens (Human).